A 367-amino-acid chain; its full sequence is Histidinol-phosphate aminotransferase (367 aa).

K230 is subject to N6-(pyridoxal phosphate)lysine.

Belongs to the class-II pyridoxal-phosphate-dependent aminotransferase family. Histidinol-phosphate aminotransferase subfamily. Homodimer. Requires pyridoxal 5'-phosphate as cofactor.

It carries out the reaction L-histidinol phosphate + 2-oxoglutarate = 3-(imidazol-4-yl)-2-oxopropyl phosphate + L-glutamate. The protein operates within amino-acid biosynthesis; L-histidine biosynthesis; L-histidine from 5-phospho-alpha-D-ribose 1-diphosphate: step 7/9. This chain is Histidinol-phosphate aminotransferase, found in Thermobifida fusca (strain YX).